Reading from the N-terminus, the 265-residue chain is Shikimate dehydrogenase (NADP(+)) (265 aa).

Residues 15-17 (SKS) and threonine 62 each bind shikimate. Residue lysine 66 is the Proton acceptor of the active site. Shikimate-binding residues include asparagine 87 and aspartate 102. NADP(+) is bound by residues 127-131 (GAGGA), 151-156 (NRTVSR), and methionine 212. Residue tyrosine 214 coordinates shikimate. Glycine 234 serves as a coordination point for NADP(+).

Belongs to the shikimate dehydrogenase family. In terms of assembly, homodimer.

The enzyme catalyses shikimate + NADP(+) = 3-dehydroshikimate + NADPH + H(+). The protein operates within metabolic intermediate biosynthesis; chorismate biosynthesis; chorismate from D-erythrose 4-phosphate and phosphoenolpyruvate: step 4/7. Functionally, involved in the biosynthesis of the chorismate, which leads to the biosynthesis of aromatic amino acids. Catalyzes the reversible NADPH linked reduction of 3-dehydroshikimate (DHSA) to yield shikimate (SA). This Thiobacillus denitrificans (strain ATCC 25259 / T1) protein is Shikimate dehydrogenase (NADP(+)).